A 225-amino-acid chain; its full sequence is Cytidylate kinase (225 aa).

10–18 (GPASSGKST) is an ATP binding site.

Belongs to the cytidylate kinase family. Type 1 subfamily.

It is found in the cytoplasm. It catalyses the reaction CMP + ATP = CDP + ADP. It carries out the reaction dCMP + ATP = dCDP + ADP. This Streptococcus suis (strain 98HAH33) protein is Cytidylate kinase.